The following is a 64-amino-acid chain: Large ribosomal subunit protein bL35 (64 aa).

2 stretches are compositionally biased toward basic residues: residues 1-15 and 23-33; these read MPKA…KRFR and VRQKANRRHLL. Positions 1–47 are disordered; that stretch reads MPKAKTHSGASKRFRTTGSGKIVRQKANRRHLLEHKPTSRTRRLDGR. Positions 34-46 are enriched in basic and acidic residues; it reads EHKPTSRTRRLDG.

It belongs to the bacterial ribosomal protein bL35 family.

This Mycobacteroides abscessus (strain ATCC 19977 / DSM 44196 / CCUG 20993 / CIP 104536 / JCM 13569 / NCTC 13031 / TMC 1543 / L948) (Mycobacterium abscessus) protein is Large ribosomal subunit protein bL35.